Consider the following 542-residue polypeptide: Coiled-coil domain-containing protein 60 (542 aa).

Residues 70–97 adopt a coiled-coil conformation; it reads TMLQEETAFKKHQQHLKKLQEEELNKFQ. 2 disordered regions span residues 228–284 and 334–358; these read ATRK…EEEV and QTTH…TQKK. Composition is skewed to low complexity over residues 245-261 and 342-351; these read SGGS…NPSS and RSSTTSGESH.

This Rattus norvegicus (Rat) protein is Coiled-coil domain-containing protein 60 (Ccdc60).